We begin with the raw amino-acid sequence, 456 residues long: tRNA-2-methylthio-N(6)-dimethylallyladenosine synthase (456 aa).

The region spanning lysine 9–serine 126 is the MTTase N-terminal domain. 6 residues coordinate [4Fe-4S] cluster: cysteine 18, cysteine 55, cysteine 89, cysteine 163, cysteine 167, and cysteine 170. The Radical SAM core domain maps to aspartate 149–alanine 381. Positions arginine 384–alanine 448 constitute a TRAM domain.

Belongs to the methylthiotransferase family. MiaB subfamily. As to quaternary structure, monomer. [4Fe-4S] cluster is required as a cofactor.

It is found in the cytoplasm. It carries out the reaction N(6)-dimethylallyladenosine(37) in tRNA + (sulfur carrier)-SH + AH2 + 2 S-adenosyl-L-methionine = 2-methylsulfanyl-N(6)-dimethylallyladenosine(37) in tRNA + (sulfur carrier)-H + 5'-deoxyadenosine + L-methionine + A + S-adenosyl-L-homocysteine + 2 H(+). Its function is as follows. Catalyzes the methylthiolation of N6-(dimethylallyl)adenosine (i(6)A), leading to the formation of 2-methylthio-N6-(dimethylallyl)adenosine (ms(2)i(6)A) at position 37 in tRNAs that read codons beginning with uridine. The chain is tRNA-2-methylthio-N(6)-dimethylallyladenosine synthase from Cellvibrio japonicus (strain Ueda107) (Pseudomonas fluorescens subsp. cellulosa).